A 99-amino-acid chain; its full sequence is RNA-binding protein Hfq (99 aa).

One can recognise a Sm domain in the interval 9–68 (DPFLNALRRERVPVSIYLVNGIKLQGQIESFDQFVILLKNTVSQMVYKHAISTVVPSRPV). The tract at residues 64–99 (PSRPVSHHSNNPGGGSNYHGNNTAASQQSQEADDAE) is disordered.

Belongs to the Hfq family. Homohexamer.

Functionally, RNA chaperone that binds small regulatory RNA (sRNAs) and mRNAs to facilitate mRNA translational regulation in response to envelope stress, environmental stress and changes in metabolite concentrations. Also binds with high specificity to tRNAs. This is RNA-binding protein Hfq from Pectobacterium carotovorum subsp. carotovorum (strain PC1).